The primary structure comprises 63 residues: MKASELREKSVEELNTELLGLLREQFNLRMQHATGQLTQTNQLKLVRRNIARVKTIITSKAGA.

The protein belongs to the universal ribosomal protein uL29 family.

The chain is Large ribosomal subunit protein uL29 from Shewanella denitrificans (strain OS217 / ATCC BAA-1090 / DSM 15013).